A 332-amino-acid polypeptide reads, in one-letter code: DNA-directed RNA polymerase subunit alpha (332 aa).

The tract at residues 1–231 is alpha N-terminal domain (alpha-NTD); it reads MVREKVTVST…DLFIPFLHME (231 aa). The interval 262-332 is alpha C-terminal domain (alpha-CTD); sequence LSLESLFIDQ…FALDLPKNLN (71 aa).

This sequence belongs to the RNA polymerase alpha chain family. In plastids the minimal PEP RNA polymerase catalytic core is composed of four subunits: alpha, beta, beta', and beta''. When a (nuclear-encoded) sigma factor is associated with the core the holoenzyme is formed, which can initiate transcription.

It localises to the plastid. The catalysed reaction is RNA(n) + a ribonucleoside 5'-triphosphate = RNA(n+1) + diphosphate. Functionally, DNA-dependent RNA polymerase catalyzes the transcription of DNA into RNA using the four ribonucleoside triphosphates as substrates. The sequence is that of DNA-directed RNA polymerase subunit alpha from Cuscuta japonica (Japanese dodder).